The chain runs to 376 residues: Phosphoglycerate kinase (376 aa).

(2R)-3-phosphoglycerate contacts are provided by Val-1, Asp-2, Phe-3, Asn-4, Arg-17, Ser-40, His-41, Gly-43, Arg-44, Leu-99, Arg-100, His-147, and Arg-148. An ADP-binding site is contributed by Gly-191. CDP is bound at residue Gly-191. Residues Ala-192 and Lys-193 each contribute to the AMP site. Position 192 (Ala-192) interacts with ATP. Mg(2+) is bound at residue Ala-192. Asp-196 serves as a coordination point for CDP. Asp-196 provides a ligand contact to Mg(2+). AMP is bound at residue Lys-197. ATP is bound at residue Lys-197. Gly-215 contributes to the ADP binding site. Gly-215 is a binding site for CDP. AMP contacts are provided by Gly-216 and Gly-290. 2 residues coordinate ATP: Gly-216 and Gly-290. CDP-binding residues include Gly-315 and Phe-320. Phe-320 contributes to the ADP binding site. Residue Glu-321 coordinates AMP. Glu-321, Asp-352, and Thr-353 together coordinate ATP. Asp-352 provides a ligand contact to Mg(2+).

This sequence belongs to the phosphoglycerate kinase family. Monomer. It depends on Mg(2+) as a cofactor.

It carries out the reaction (2R)-3-phosphoglycerate + ATP = (2R)-3-phospho-glyceroyl phosphate + ADP. The protein operates within carbohydrate degradation; glycolysis; pyruvate from D-glyceraldehyde 3-phosphate: step 2/5. The chain is Phosphoglycerate kinase (PGK) from Glaucoma chattoni.